A 520-amino-acid polypeptide reads, in one-letter code: MLSRTRAAAPNSRIFTRSLLRLYSQAPLRVPITLPNGFTYEQPTGLFINGEFVASKQKKTFDVINPSNEEKITTVYKAMEDDVDEAVAAAKKAFETKWSIVEPEVRAKALFNLADLVEKHQETLAAIESMDNGKSLFCARGDVALVSKYLRSCGGWADKIYGNVIDTGKNHFTYSIKEPLGVCGQIIPWNFPLLMWSWKIGPALATGNTVVLKPAETTPLSALFASQLCQEAGIPAGVVNILPGSGRVVGERLSAHPDVKKIAFTGSTATGRHIMKVAADTVKKVTLELGGKSPNIVFADADLDKAVKNIAFGIFYNSGEVCCAGSRIYIQDTVYEEVLQKLKDYTESLKVGDPFDEEVFQGAQTSDKQLHKILDYVDVAKSEGARLVTGGARHGSKGYFVKPTVFADVKEDMRIVKEEVFGPIVTVSKFSTVDEVIAMANDSQYGLAAGIHTNDINKAVDVSKRVKAGTVWINTYNNFHQNVPFGGFGQSGIGREMGEAALSNYTQTKSVRIAIDKPIR.

The N-terminal 23 residues, Met-1–Tyr-23, are a transit peptide targeting the mitochondrion. Gly-266–Gly-271 serves as a coordination point for NAD(+). Glu-288 functions as the Proton acceptor in the catalytic mechanism. Cys-322 acts as the Nucleophile in catalysis.

Belongs to the aldehyde dehydrogenase family.

It is found in the mitochondrion matrix. The catalysed reaction is an aldehyde + NADP(+) + H2O = a carboxylate + NADPH + 2 H(+). It catalyses the reaction an aldehyde + NAD(+) + H2O = a carboxylate + NADH + 2 H(+). It functions in the pathway alcohol metabolism; ethanol degradation; acetate from ethanol: step 2/2. Induced by potassium ions. In terms of biological role, minor mitochondrial aldehyde dehydrogenase isoform. Plays a role in regulation or biosynthesis of electron transport chain components. Involved in the biosynthesis of acetate during anaerobic growth on glucose. The sequence is that of Aldehyde dehydrogenase 5, mitochondrial (ALD5) from Saccharomyces cerevisiae (strain YJM789) (Baker's yeast).